The sequence spans 251 residues: tRNA (guanine-N(7)-)-methyltransferase (251 aa).

Residues Gly-71, 94 to 95 (EL), 128 to 129 (NS), and Leu-148 contribute to the S-adenosyl-L-methionine site. Residue Asp-151 is part of the active site. 226–228 (TEE) contacts S-adenosyl-L-methionine.

Belongs to the class I-like SAM-binding methyltransferase superfamily. TrmB family.

The protein localises to the nucleus. The catalysed reaction is guanosine(46) in tRNA + S-adenosyl-L-methionine = N(7)-methylguanosine(46) in tRNA + S-adenosyl-L-homocysteine. The protein operates within tRNA modification; N(7)-methylguanine-tRNA biosynthesis. In terms of biological role, catalyzes the formation of N(7)-methylguanine at position 46 (m7G46) in tRNA. In Arabidopsis thaliana (Mouse-ear cress), this protein is tRNA (guanine-N(7)-)-methyltransferase.